Reading from the N-terminus, the 134-residue chain is Large ribosomal subunit protein uL16c (134 aa).

The segment at 1–21 (MLSPKRTKYRKHHRGRMRGKA) is disordered.

This sequence belongs to the universal ribosomal protein uL16 family. In terms of assembly, part of the 50S ribosomal subunit.

The protein localises to the plastid. Its subcellular location is the chloroplast. In Chlorella vulgaris (Green alga), this protein is Large ribosomal subunit protein uL16c.